The chain runs to 373 residues: Queuine tRNA-ribosyltransferase (373 aa).

Asp-94 functions as the Proton acceptor in the catalytic mechanism. Substrate contacts are provided by residues 94–98 (DSGGF), Asp-148, Gln-190, and Gly-217. Positions 248–254 (GVGSPDC) are RNA binding. Asp-267 acts as the Nucleophile in catalysis. An RNA binding; important for wobble base 34 recognition region spans residues 272–276 (TRIAR). 4 residues coordinate Zn(2+): Cys-305, Cys-307, Cys-310, and His-336.

The protein belongs to the queuine tRNA-ribosyltransferase family. As to quaternary structure, homodimer. Within each dimer, one monomer is responsible for RNA recognition and catalysis, while the other monomer binds to the replacement base PreQ1. It depends on Zn(2+) as a cofactor.

The catalysed reaction is 7-aminomethyl-7-carbaguanine + guanosine(34) in tRNA = 7-aminomethyl-7-carbaguanosine(34) in tRNA + guanine. It participates in tRNA modification; tRNA-queuosine biosynthesis. Catalyzes the base-exchange of a guanine (G) residue with the queuine precursor 7-aminomethyl-7-deazaguanine (PreQ1) at position 34 (anticodon wobble position) in tRNAs with GU(N) anticodons (tRNA-Asp, -Asn, -His and -Tyr). Catalysis occurs through a double-displacement mechanism. The nucleophile active site attacks the C1' of nucleotide 34 to detach the guanine base from the RNA, forming a covalent enzyme-RNA intermediate. The proton acceptor active site deprotonates the incoming PreQ1, allowing a nucleophilic attack on the C1' of the ribose to form the product. After dissociation, two additional enzymatic reactions on the tRNA convert PreQ1 to queuine (Q), resulting in the hypermodified nucleoside queuosine (7-(((4,5-cis-dihydroxy-2-cyclopenten-1-yl)amino)methyl)-7-deazaguanosine). The sequence is that of Queuine tRNA-ribosyltransferase from Moorella thermoacetica (strain ATCC 39073 / JCM 9320).